The primary structure comprises 199 residues: Recombination protein RecR (199 aa).

The segment at 57–72 adopts a C4-type zinc-finger fold; it reads CSICGNITEDDPCDIC. The region spanning 80-176 is the Toprim domain; that stretch reads KAVLVVEDSK…KVTRLAHGLS (97 aa).

The protein belongs to the RecR family.

May play a role in DNA repair. It seems to be involved in an RecBC-independent recombinational process of DNA repair. It may act with RecF and RecO. The sequence is that of Recombination protein RecR from Pediococcus pentosaceus (strain ATCC 25745 / CCUG 21536 / LMG 10740 / 183-1w).